Reading from the N-terminus, the 301-residue chain is Ankyrin repeat domain-containing protein 29 (301 aa).

ANK repeat units follow at residues 11-41 (PLAN…DVDC), 45-74 (HGTT…DINL), 78-107 (SGTT…STEF), 111-140 (DGGT…NIHD), 144-173 (DGAT…KVNQ), 177-206 (DGTA…DRDA), 210-239 (DGTT…TLGI), and 242-271 (NGTS…DPSL).

This chain is Ankyrin repeat domain-containing protein 29 (ANKRD29), found in Homo sapiens (Human).